A 131-amino-acid polypeptide reads, in one-letter code: D-ribose pyranase (131 aa).

Histidine 20 acts as the Proton donor in catalysis. Substrate-binding positions include aspartate 28, histidine 98, and phenylalanine 120–asparagine 122.

Belongs to the RbsD / FucU family. RbsD subfamily. As to quaternary structure, homodecamer.

It localises to the cytoplasm. It carries out the reaction beta-D-ribopyranose = beta-D-ribofuranose. It participates in carbohydrate metabolism; D-ribose degradation; D-ribose 5-phosphate from beta-D-ribopyranose: step 1/2. Its function is as follows. Catalyzes the interconversion of beta-pyran and beta-furan forms of D-ribose. This Oenococcus oeni (strain ATCC BAA-331 / PSU-1) protein is D-ribose pyranase.